A 288-amino-acid polypeptide reads, in one-letter code: Anthranilate synthase beta subunit 1, chloroplastic (288 aa).

The N-terminal 58 residues, Met-1–Val-58, are a transit peptide targeting the chloroplast. Positions Pro-83–Gln-282 constitute a Glutamine amidotransferase type-1 domain. Gly-134–Gly-136 is an L-glutamine binding site. The Nucleophile role is filled by Cys-161. L-glutamine is bound by residues Gln-165 and Ser-215–Leu-216. Active-site residues include His-256 and Glu-258.

As to quaternary structure, heterotetramer consisting of two non-identical subunits: a beta subunit and a large alpha subunit. In terms of tissue distribution, expressed in roots and leaves.

The protein localises to the plastid. It is found in the chloroplast. It carries out the reaction chorismate + L-glutamine = anthranilate + pyruvate + L-glutamate + H(+). It functions in the pathway amino-acid biosynthesis; L-tryptophan biosynthesis; L-tryptophan from chorismate: step 1/5. Part of a heterotetrameric complex that catalyzes the two-step biosynthesis of anthranilate, an intermediate in the biosynthesis of L-tryptophan. In the first step, the glutamine-binding beta subunit of anthranilate synthase (AS) provides the glutamine amidotransferase activity which generates ammonia as a substrate that, along with chorismate, is used in the second step, catalyzed by the large alpha subunit of AS to produce anthranilate. In Oryza sativa subsp. japonica (Rice), this protein is Anthranilate synthase beta subunit 1, chloroplastic.